The following is a 469-amino-acid chain: 1-aminocyclopropane-1-carboxylate synthase 8 (469 aa).

Substrate is bound by residues glutamate 47 and tyrosine 85. Residue lysine 272 is modified to N6-(pyridoxal phosphate)lysine.

It belongs to the class-I pyridoxal-phosphate-dependent aminotransferase family. In terms of assembly, homodimer and heterodimer. In vivo, the relevance of heterodimerization with other ACS enzymes is however unsure. Interacts with GRF3. It depends on pyridoxal 5'-phosphate as a cofactor. May be processed at its C-terminus. Expressed in roots. Expressed at low level in flowers and siliques.

The enzyme catalyses S-adenosyl-L-methionine = 1-aminocyclopropane-1-carboxylate + S-methyl-5'-thioadenosine + H(+). Its pathway is alkene biosynthesis; ethylene biosynthesis via S-adenosyl-L-methionine; ethylene from S-adenosyl-L-methionine: step 1/2. Its function is as follows. 1-aminocyclopropane-1-carboxylate synthase (ACS) enzymes catalyze the conversion of S-adenosyl-L-methionine (SAM) into 1-aminocyclopropane-1-carboxylate (ACC), a direct precursor of ethylene. The sequence is that of 1-aminocyclopropane-1-carboxylate synthase 8 (ACS8) from Arabidopsis thaliana (Mouse-ear cress).